A 197-amino-acid polypeptide reads, in one-letter code: Nucleoid occlusion factor SlmA (197 aa).

The region spanning 7–67 is the HTH tetR-type domain; that stretch reads INRREHILQC…GLIEFIEDAI (61 aa). A DNA-binding region (H-T-H motif) is located at residues 30-49; sequence TTAKLAAEVGVSEAALYRHF.

This sequence belongs to the nucleoid occlusion factor SlmA family. As to quaternary structure, homodimer. Interacts with FtsZ.

It localises to the cytoplasm. The protein localises to the nucleoid. Required for nucleoid occlusion (NO) phenomenon, which prevents Z-ring formation and cell division over the nucleoid. Acts as a DNA-associated cell division inhibitor that binds simultaneously chromosomal DNA and FtsZ, and disrupts the assembly of FtsZ polymers. SlmA-DNA-binding sequences (SBS) are dispersed on non-Ter regions of the chromosome, preventing FtsZ polymerization at these regions. The protein is Nucleoid occlusion factor SlmA of Shewanella denitrificans (strain OS217 / ATCC BAA-1090 / DSM 15013).